We begin with the raw amino-acid sequence, 293 residues long: 5'-3' exoribonuclease Rnm (293 aa).

Mn(2+)-binding residues include His17, His19, Asp24, His49, Glu76, His87, His202, Asp259, and His261.

Belongs to the PHP family. TrpH/YciV subfamily. It depends on Mn(2+) as a cofactor.

The enzyme catalyses a ribonucleoside 3',5'-bisphosphate + H2O = a ribonucleoside 5'-phosphate + phosphate. Its function is as follows. Exoribonuclease that catalyzes the last steps of 5S, 16S and 23S rRNA 5'-end maturation. Removes 3 nucleotides (nt) from the 5' end of 5S, 16S and 23S rRNA precursors to generate the mature 5' ends. 5S and 23S rRNA maturation occurs more efficiently and accurately on ribosomal particles as compared to free RNA. Efficiently catalyzes the hydrolysis of the 3'-phosphate from 3',5'-bis-phosphonucleotides as well as the successive hydrolysis of 5'-phosphomononucleotides from the 5'-end of short pieces of RNA and DNA, with no specificity toward the identity of the nucleotide base. Is more efficient at hydrolyzing RNA oligonucleotides than DNA oligonucleotides. This enzyme can also hydrolyze annealed DNA duplexes, albeit at a catalytic efficiency lower than that of the corresponding single-stranded oligonucleotides. The sequence is that of 5'-3' exoribonuclease Rnm from Salmonella typhimurium (strain LT2 / SGSC1412 / ATCC 700720).